A 560-amino-acid polypeptide reads, in one-letter code: Choline/ethanolamine transporter FLVCR1 (560 aa).

The segment at 1–22 (MVKLNDEEGAAMAPGHQPTNGY) is disordered. Topologically, residues 1–99 (MVKLNDEEGA…TPGTEGSPAP (99 aa)) are cytoplasmic. Ser56 bears the Phosphoserine mark. The interval 68–99 (QTPLAPEEETQTRLLPTGPGEETPGTEGSPAP) is disordered. Residues 83-95 (PTGPGEETPGTEG) are compositionally biased toward low complexity. Residues 100 to 124 (QTALSARRFVVLLIFSLYSLVNAFQ) traverse the membrane as a helical segment. The Extracellular portion of the chain corresponds to 125-142 (WIQYSVISNVFEGFYGVS). The chain crosses the membrane as a helical span at residues 143–170 (SLHIDWLSMVYMLAYVPLIFPATWLLDT). Over 171-172 (RG) the chain is Cytoplasmic. Residues 173–192 (LRLTALLGSGLNCLGAWVKC) traverse the membrane as a helical segment. The Extracellular portion of the chain corresponds to 193–199 (ASVQQHL). Residues 200–228 (FWVTMLGQCLCSVAQVFILGLPSRIASVW) form a helical membrane-spanning segment. Gln214 is an ethanolamine binding site. Residues 229 to 233 (FGPKE) are Cytoplasmic-facing. The helical transmembrane segment at 234 to 259 (VSTACATAVLGNQLGAAIGFLLPPVL) threads the bilayer. Residues 260–265 (VPNTQN) lie on the Extracellular side of the membrane. Asn265 carries N-linked (GlcNAc...) asparagine glycosylation. Residues 266-295 (NTDLLACNISTMFYGTSSVATFLCFLTIIA) traverse the membrane as a helical segment. Residues 296-331 (FKEKPQYPPSQAQAALQNSPPAKYSYKKSIRNLFRN) lie on the Cytoplasmic side of the membrane. A helical transmembrane segment spans residues 332–362 (VPFVLLLITYGIITGAFYSVSTLLNQMILTY). Over 363–366 (YKGE) the chain is Extracellular. Residues 367–395 (EVSAGKIGLTLVVAGMVGSILCGFWLDYT) form a helical membrane-spanning segment. The Cytoplasmic segment spans residues 396-397 (KI). The chain crosses the membrane as a helical span at residues 398 to 420 (YKQTTLIVYILSFLGMVIFTFTL). Residues 421-423 (DLG) lie on the Extracellular side of the membrane. The chain crosses the membrane as a helical span at residues 424–453 (YGIVVFVTGGVLGFFMTGYLPLGFEFAVEI). Over 454–461 (TYPESEGT) the chain is Cytoplasmic. The helical transmembrane segment at 462-487 (SSGLLNAAAQIFGILFTLAQGKLTTD) threads the bilayer. Gln471 contacts ethanolamine. Gln471 serves as a coordination point for choline. The Extracellular segment spans residues 488-489 (YS). The chain crosses the membrane as a helical span at residues 490–512 (PKAGNIFLCVWLFLGIILTALIK). At 513-560 (SDLRRHNINIGIANGDIKAVPVEDTVEDSPTDKESKTIVMSKQSESAI) the chain is on the cytoplasmic side. The disordered stretch occupies residues 537–560 (TVEDSPTDKESKTIVMSKQSESAI). Ser541 is subject to Phosphoserine. A compositionally biased stretch (polar residues) spans 550 to 560 (IVMSKQSESAI).

It belongs to the major facilitator superfamily. Feline leukemia virus subgroup C receptor (TC 2.A.1.28.1) family.

It localises to the cell membrane. The catalysed reaction is choline(out) = choline(in). It catalyses the reaction ethanolamine(in) = ethanolamine(out). It carries out the reaction heme b(in) = heme b(out). In terms of biological role, uniporter that mediates the transport of extracellular choline and ethanolamine into cells, thereby playing a key role in phospholipid biosynthesis. Choline and ethanolamine are the precursors of phosphatidylcholine and phosphatidylethanolamine, respectively, the two most abundant phospholipids. Transport is not coupled with proton transport and is exclusively driven by the choline (or ethanolamine) gradient across the plasma membrane. Also acts as a heme b transporter that mediates heme efflux from the cytoplasm to the extracellular compartment. Functionally, (Microbial infection) Confers susceptibility to Feline leukemia virus subgroup C (FeLV-C) infection, which is associated with fatal erythroid aplasia, also known as aplastic anemia. This Felis catus (Cat) protein is Choline/ethanolamine transporter FLVCR1 (FLVCR1).